A 304-amino-acid polypeptide reads, in one-letter code: Coenzyme PQQ synthesis protein B (304 aa).

The protein belongs to the PqqB family.

It participates in cofactor biosynthesis; pyrroloquinoline quinone biosynthesis. Its function is as follows. May be involved in the transport of PQQ or its precursor to the periplasm. The protein is Coenzyme PQQ synthesis protein B of Stutzerimonas stutzeri (Pseudomonas stutzeri).